The primary structure comprises 510 residues: ATP synthase subunit alpha, chloroplastic (510 aa).

170 to 177 (GDRQTGKT) is an ATP binding site.

This sequence belongs to the ATPase alpha/beta chains family. In terms of assembly, F-type ATPases have 2 components, CF(1) - the catalytic core - and CF(0) - the membrane proton channel. CF(1) has five subunits: alpha(3), beta(3), gamma(1), delta(1), epsilon(1). CF(0) has four main subunits: a, b, b' and c.

The protein localises to the plastid. The protein resides in the chloroplast thylakoid membrane. The catalysed reaction is ATP + H2O + 4 H(+)(in) = ADP + phosphate + 5 H(+)(out). Produces ATP from ADP in the presence of a proton gradient across the membrane. The alpha chain is a regulatory subunit. The protein is ATP synthase subunit alpha, chloroplastic of Lotus japonicus (Lotus corniculatus var. japonicus).